The following is a 367-amino-acid chain: Phosphoribosylaminoimidazole-succinocarboxamide synthase (367 aa).

Belongs to the SAICAR synthetase family.

It catalyses the reaction 5-amino-1-(5-phospho-D-ribosyl)imidazole-4-carboxylate + L-aspartate + ATP = (2S)-2-[5-amino-1-(5-phospho-beta-D-ribosyl)imidazole-4-carboxamido]succinate + ADP + phosphate + 2 H(+). It functions in the pathway purine metabolism; IMP biosynthesis via de novo pathway; 5-amino-1-(5-phospho-D-ribosyl)imidazole-4-carboxamide from 5-amino-1-(5-phospho-D-ribosyl)imidazole-4-carboxylate: step 1/2. The protein is Phosphoribosylaminoimidazole-succinocarboxamide synthase of Shewanella putrefaciens (strain CN-32 / ATCC BAA-453).